Reading from the N-terminus, the 261-residue chain is Transmembrane protein 187 (261 aa).

6 helical membrane passes run Ala-8–Phe-28, Ala-43–Ala-63, Val-88–Trp-108, Val-113–Leu-133, Trp-140–Gly-162, and Ser-190–Cys-210.

Ubiquitous.

The protein resides in the membrane. The polypeptide is Transmembrane protein 187 (TMEM187) (Homo sapiens (Human)).